We begin with the raw amino-acid sequence, 431 residues long: GTPase Obg (431 aa).

In terms of domain architecture, Obg spans Met-1–Leu-158. The segment at Lys-118–Glu-144 is disordered. Positions Ala-159–Glu-330 constitute an OBG-type G domain. Residues Gly-165–Ser-172, Phe-190–Lys-194, Asp-212–Gly-215, Asn-282–Asp-285, and Ser-311–Phe-313 contribute to the GTP site. Residues Ser-172 and Thr-192 each contribute to the Mg(2+) site. Residues Lys-353 to Glu-431 form the OCT domain.

The protein belongs to the TRAFAC class OBG-HflX-like GTPase superfamily. OBG GTPase family. In terms of assembly, monomer. Mg(2+) serves as cofactor.

Its subcellular location is the cytoplasm. An essential GTPase which binds GTP, GDP and possibly (p)ppGpp with moderate affinity, with high nucleotide exchange rates and a fairly low GTP hydrolysis rate. Plays a role in control of the cell cycle, stress response, ribosome biogenesis and in those bacteria that undergo differentiation, in morphogenesis control. The protein is GTPase Obg of Staphylococcus saprophyticus subsp. saprophyticus (strain ATCC 15305 / DSM 20229 / NCIMB 8711 / NCTC 7292 / S-41).